The chain runs to 343 residues: D-beta-hydroxybutyrate dehydrogenase, mitochondrial (343 aa).

The N-terminal 46 residues, methionine 1 to tyrosine 46, are a transit peptide targeting the mitochondrion. Leucine 59–phenylalanine 83 contributes to the NAD(+) binding site. Lysine 73 is subject to N6-acetyllysine. An N6-acetyllysine; alternate modification is found at lysine 103. An N6-succinyllysine; alternate modification is found at lysine 103. N6-acetyllysine occurs at positions 132 and 177. Serine 195 contributes to the substrate binding site. Residue tyrosine 208 is the Proton acceptor of the active site. Lysine 212 carries the post-translational modification N6-acetyllysine. Serine 219 is a glycosylation site (O-linked (GlcNAc) serine). Serine 246 is modified (phosphoserine). N6-acetyllysine is present on lysine 258. Lysine 259 is modified (N6-acetyllysine; alternate). Position 259 is an N6-succinyllysine; alternate (lysine 259). Lysine 280 is subject to N6-acetyllysine.

It belongs to the short-chain dehydrogenases/reductases (SDR) family. Homotetramer. In terms of tissue distribution, expressed in liver.

It localises to the mitochondrion inner membrane. It is found in the mitochondrion matrix. The catalysed reaction is (R)-3-hydroxybutanoate + NAD(+) = acetoacetate + NADH + H(+). With respect to regulation, requires phosphatidylcholine as an allosteric activator for enzymatic activity. This chain is D-beta-hydroxybutyrate dehydrogenase, mitochondrial, found in Rattus norvegicus (Rat).